The following is a 135-amino-acid chain: Large ribosomal subunit protein eL27y (135 aa).

The protein belongs to the eukaryotic ribosomal protein eL27 family.

The protein is Large ribosomal subunit protein eL27y (RPL27B) of Arabidopsis thaliana (Mouse-ear cress).